A 469-amino-acid polypeptide reads, in one-letter code: NADH-quinone oxidoreductase subunit 13 (469 aa).

Transmembrane regions (helical) follow at residues 1 to 21, 23 to 43, 47 to 67, 69 to 89, 91 to 111, 115 to 135, 144 to 164, 190 to 210, 258 to 278, 284 to 304, 308 to 328, 354 to 374, 390 to 410, and 430 to 450; these read MVVLAVLLPVVFGALLLLGLP, ALGVLGAGLSFLLNLYLFLTH, VAHAFQAPLLPGAGVYWAFGL, GLSALFFLTIALTVFLGALVA, VEGRFLGLALLMEGLLLGLFA, LLVFYVFFEAALIPALLMLYL, ALYTFVLFTLVGSLPMLAAVL, AFWVFLGFALAFAIKTPLFPL, GLLLFLAALSALYGAWVAFAA, LLAYAGLSHMGVAALGVFSGT, AMGGLYLLAASGVYTGGLFLL, LAALALILFLAMVGLPGLSGF, WLAALAFLSVIASAAYALTAF, and WGFALLSVLALLLMGVFPGYF.

It belongs to the complex I subunit 4 family. As to quaternary structure, NDH-1 is composed of 15 different subunits, Nqo1 to Nqo15. The complex has a L-shaped structure, with the hydrophobic arm (subunits Nqo7, Nqo8 and Nqo10 to Nqo14) embedded in the membrane and the hydrophilic peripheral arm (subunits Nqo1 to Nqo6, Nqo9 and Nqo15) protruding into the bacterial cytoplasm. The hydrophilic domain contains all the redox centers.

The protein localises to the cell inner membrane. It catalyses the reaction a quinone + NADH + 5 H(+)(in) = a quinol + NAD(+) + 4 H(+)(out). Functionally, NDH-1 shuttles electrons from NADH, via FMN and iron-sulfur (Fe-S) centers, to quinones in the respiratory chain. The immediate electron acceptor for the enzyme in this species is menaquinone. Couples the redox reaction to proton translocation (for every two electrons transferred, four hydrogen ions are translocated across the cytoplasmic membrane), and thus conserves the redox energy in a proton gradient required for the synthesis of ATP. This chain is NADH-quinone oxidoreductase subunit 13 (nqo13), found in Thermus thermophilus (strain ATCC 27634 / DSM 579 / HB8).